The chain runs to 192 residues: dTTP/UTP pyrophosphatase (192 aa).

Residue Asp68 is the Proton acceptor of the active site.

It belongs to the Maf family. YhdE subfamily. A divalent metal cation is required as a cofactor.

Its subcellular location is the cytoplasm. The enzyme catalyses dTTP + H2O = dTMP + diphosphate + H(+). It carries out the reaction UTP + H2O = UMP + diphosphate + H(+). In terms of biological role, nucleoside triphosphate pyrophosphatase that hydrolyzes dTTP and UTP. May have a dual role in cell division arrest and in preventing the incorporation of modified nucleotides into cellular nucleic acids. The chain is dTTP/UTP pyrophosphatase from Cereibacter sphaeroides (strain ATCC 17023 / DSM 158 / JCM 6121 / CCUG 31486 / LMG 2827 / NBRC 12203 / NCIMB 8253 / ATH 2.4.1.) (Rhodobacter sphaeroides).